The following is a 642-amino-acid chain: Frizzled and smoothened-like protein B (642 aa).

The N-terminal stretch at 1-26 (MFNKNNNNNKIIIILKLFLIILIVNN) is a signal peptide. The Extracellular portion of the chain corresponds to 27 to 264 (NNNIKTFGLN…KWHQMYNMSK (238 aa)). One can recognise an FZ domain in the interval 47–197 (DPTATCSNYI…GFFPVPCSDP (151 aa)). 3 disulfides stabilise this stretch: cysteine 52-cysteine 123, cysteine 65-cysteine 116, and cysteine 143-cysteine 194. N-linked (GlcNAc...) asparagine glycans are attached at residues asparagine 80, asparagine 153, asparagine 162, asparagine 177, asparagine 203, asparagine 222, and asparagine 261. The helical transmembrane segment at 265 to 285 (ILSTISFVCSIYNVLTFGILN) threads the bilayer. Topologically, residues 286 to 294 (HRRSKYNYC) are cytoplasmic. Residues 295-315 (ITFFSASVIIITMMDIVTYGI) form a helical membrane-spanning segment. The Extracellular segment spans residues 316–344 (GYEKLLCPEPGRFAVQSDVSCGATGALFH). Residues 345–365 (IGITNGVFWWTTMSICLFAVV) traverse the membrane as a helical segment. Over 366–375 (KRIKLFDFRY) the chain is Cytoplasmic. A helical membrane pass occupies residues 376–398 (FIIFNTTASLISVIIPLAGNAFM). At 399 to 416 (AGTGSLACWIRKTWYVNS) the chain is on the extracellular side. A helical membrane pass occupies residues 417–437 (VFWIPCGIALTIGSVCIILVI). Residues 438-460 (YEIYKITKNVSTKDNRMILLQIK) lie on the Cytoplasmic side of the membrane. Residues 461–481 (PFLCVTLVGGSFYYLFIFNFD) form a helical membrane-spanning segment. Asparagine 482 is a glycosylation site (N-linked (GlcNAc...) asparagine). Topologically, residues 482–514 (NESHSKEYKEKVVDYVMCLLSDTGKECLMAGPN) are extracellular. The helical transmembrane segment at 515 to 535 (YVAYFVFYFFIRLFGITFFCI) threads the bilayer. Residues 536-642 (YGTSQNARDI…INSASNTSSD (107 aa)) lie on the Cytoplasmic side of the membrane. Residues 578 to 642 (GTNPTSNSKN…INSASNTSSD (65 aa)) are disordered. Positions 583–598 (SNSKNSKNNQNNQNNN) are enriched in low complexity. Positions 584–611 (NSKNSKNNQNNQNNNSRKEFESKNIELE) form a coiled coil. Over residues 599 to 609 (SRKEFESKNIE) the composition is skewed to basic and acidic residues. Polar residues-rich tracts occupy residues 614-623 (ESISKGQTTR) and 632-642 (NINSASNTSSD).

It belongs to the G-protein coupled receptor Fz/Smo family.

The protein localises to the membrane. The sequence is that of Frizzled and smoothened-like protein B (fslB) from Dictyostelium discoideum (Social amoeba).